Consider the following 140-residue polypeptide: Nucleoside diphosphate kinase (140 aa).

6 residues coordinate ATP: K11, F59, R87, T93, R104, and N114. The Pros-phosphohistidine intermediate role is filled by H117.

It belongs to the NDK family. Homotetramer. The cofactor is Mg(2+).

Its subcellular location is the cytoplasm. The enzyme catalyses a 2'-deoxyribonucleoside 5'-diphosphate + ATP = a 2'-deoxyribonucleoside 5'-triphosphate + ADP. It carries out the reaction a ribonucleoside 5'-diphosphate + ATP = a ribonucleoside 5'-triphosphate + ADP. Major role in the synthesis of nucleoside triphosphates other than ATP. The ATP gamma phosphate is transferred to the NDP beta phosphate via a ping-pong mechanism, using a phosphorylated active-site intermediate. This is Nucleoside diphosphate kinase from Methylobacterium radiotolerans (strain ATCC 27329 / DSM 1819 / JCM 2831 / NBRC 15690 / NCIMB 10815 / 0-1).